Consider the following 476-residue polypeptide: Bifunctional protein HldE (476 aa).

Positions 1–318 (MKPTLPNYDQ…AEAIHGSQDS (318 aa)) are ribokinase. Position 195–198 (195–198 (NMLE)) interacts with ATP. The active site involves D264. The segment at 344-476 (MTNGCFDILH…IIEAIKGGRG (133 aa)) is cytidylyltransferase.

It in the N-terminal section; belongs to the carbohydrate kinase PfkB family. This sequence in the C-terminal section; belongs to the cytidylyltransferase family. In terms of assembly, homodimer.

It catalyses the reaction D-glycero-beta-D-manno-heptose 7-phosphate + ATP = D-glycero-beta-D-manno-heptose 1,7-bisphosphate + ADP + H(+). The enzyme catalyses D-glycero-beta-D-manno-heptose 1-phosphate + ATP + H(+) = ADP-D-glycero-beta-D-manno-heptose + diphosphate. It functions in the pathway nucleotide-sugar biosynthesis; ADP-L-glycero-beta-D-manno-heptose biosynthesis; ADP-L-glycero-beta-D-manno-heptose from D-glycero-beta-D-manno-heptose 7-phosphate: step 1/4. It participates in nucleotide-sugar biosynthesis; ADP-L-glycero-beta-D-manno-heptose biosynthesis; ADP-L-glycero-beta-D-manno-heptose from D-glycero-beta-D-manno-heptose 7-phosphate: step 3/4. Its function is as follows. Catalyzes the phosphorylation of D-glycero-D-manno-heptose 7-phosphate at the C-1 position to selectively form D-glycero-beta-D-manno-heptose-1,7-bisphosphate. Catalyzes the ADP transfer from ATP to D-glycero-beta-D-manno-heptose 1-phosphate, yielding ADP-D-glycero-beta-D-manno-heptose. The protein is Bifunctional protein HldE of Aliivibrio fischeri (strain MJ11) (Vibrio fischeri).